The primary structure comprises 200 residues: Probable gluconokinase (200 aa).

Residue 34–41 (GVSGSGKT) coordinates ATP.

This sequence belongs to the gluconokinase GntK/GntV family.

The enzyme catalyses D-gluconate + ATP = 6-phospho-D-gluconate + ADP + H(+). It participates in carbohydrate acid metabolism; D-gluconate degradation. The chain is Probable gluconokinase from Dictyostelium discoideum (Social amoeba).